A 469-amino-acid chain; its full sequence is Protein RUFY3 (469 aa).

Phosphothreonine is present on residues T5 and T12. Residues S34 and S49 each carry the phosphoserine modification. T51 is subject to Phosphothreonine. The 133-residue stretch at 95 to 227 (DSDYAPLQQF…IDANFCMKGE (133 aa)) folds into the RUN domain. 2 coiled-coil regions span residues 271-362 (NRHL…VEKE) and 422-463 (KSEL…AANK).

As to quaternary structure, interacts with PAK1. Interacts (via C-terminus) with Ras-related Rab-5 proteins. Interacts (via C-terminus) with Ras-related Rap-2 proteins. Interacts with PIK3CA and PIK3R1. Interacts (via N-terminus) with FSCN1; this interaction induces neuron axon development. Interacts with DBN1. Interacts (via the second coiled coil) with GTP-, but not GDP-bound ARL8A and ARL8B. Interacts with dynactin/DCTN1 and the dynein intermediate chain DYNC1I1/2. Directly interacts with DYNC1LI1. Post-translationally, phosphorylated by PAK1. Isoform 1 is partially phosphorylated. In terms of tissue distribution, overexpressed in gastric cancer cells and tissues (at protein level).

The protein resides in the cytoplasm. Its subcellular location is the endomembrane system. It localises to the cell projection. The protein localises to the invadopodium. It is found in the perikaryon. The protein resides in the growth cone. Its subcellular location is the filopodium. It localises to the lamellipodium. The protein localises to the lysosome. Functionally, ARL8 effector that promotes the coupling of endolysosomes to dynein-dynactin for retrograde transport along microtubules. Acts by binding both GTP-bound ARL8 and dynein-dynactin. In nonneuronal cells, promotes concentration of endolysosomes in the juxtanuclear area. In hippocampal neurons, drives retrograde transport of endolysosomes from the axon to the soma. Plays a role in the generation of neuronal polarity formation and axon growth. Implicated in the formation of a single axon by developing neurons. May inhibit the formation of additional axons by inhibition of PI3K in minor neuronal processes. Plays a role in the formation of F-actin-enriched protrusive structures at the cell periphery. Plays a role in cytoskeletal organization by regulating the subcellular localization of FSCN1 and DBN1 at axonal growth cones. This is Protein RUFY3 from Homo sapiens (Human).